The following is a 112-amino-acid chain: Transmembrane protein 14 homolog (112 aa).

Residues 3 to 23 (VDWFGYVYAATVAAGGIMGYA) form a helical membrane-spanning segment.

It belongs to the TMEM14 family.

The protein localises to the membrane. This Drosophila melanogaster (Fruit fly) protein is Transmembrane protein 14 homolog.